Consider the following 301-residue polypeptide: Lipoyl synthase (301 aa).

Residues C50, C55, C61, C76, C80, C83, and S289 each contribute to the [4Fe-4S] cluster site. Residues 62-278 (WNHRTATFLL…RRYALERGFR (217 aa)) form the Radical SAM core domain.

It belongs to the radical SAM superfamily. Lipoyl synthase family. The cofactor is [4Fe-4S] cluster.

The protein localises to the cytoplasm. The catalysed reaction is [[Fe-S] cluster scaffold protein carrying a second [4Fe-4S](2+) cluster] + N(6)-octanoyl-L-lysyl-[protein] + 2 oxidized [2Fe-2S]-[ferredoxin] + 2 S-adenosyl-L-methionine + 4 H(+) = [[Fe-S] cluster scaffold protein] + N(6)-[(R)-dihydrolipoyl]-L-lysyl-[protein] + 4 Fe(3+) + 2 hydrogen sulfide + 2 5'-deoxyadenosine + 2 L-methionine + 2 reduced [2Fe-2S]-[ferredoxin]. The protein operates within protein modification; protein lipoylation via endogenous pathway; protein N(6)-(lipoyl)lysine from octanoyl-[acyl-carrier-protein]: step 2/2. Functionally, catalyzes the radical-mediated insertion of two sulfur atoms into the C-6 and C-8 positions of the octanoyl moiety bound to the lipoyl domains of lipoate-dependent enzymes, thereby converting the octanoylated domains into lipoylated derivatives. This Roseiflexus sp. (strain RS-1) protein is Lipoyl synthase.